We begin with the raw amino-acid sequence, 1169 residues long: C5a peptidase (1169 aa).

The signal sequence occupies residues 1–31; that stretch reads MRKKQKLPFDKLAIALMSTSILLNAQSDIKA. Positions 33–111 are disordered; that stretch reads TVTEDTPATE…ETIRDLNDPS (79 aa). Residues 48–67 show a composition bias toward polar residues; it reads PQQTAVSEEAPSSSSKETNP. The Peptidase S8 domain occupies 101–583; that stretch reads KETIRDLNDP…AGAVDAKKAS (483 aa). Residues 102–111 are compositionally biased toward basic and acidic residues; the sequence is ETIRDLNDPS. Catalysis depends on charge relay system residues Asp132, His195, and Ser514. The tract at residues 1028–1135 is disordered; the sequence is NLLEGHSNKP…RDQLPTTNDK (108 aa). 3 stretches are compositionally biased toward basic and acidic residues: residues 1033-1056, 1063-1073, and 1080-1092; these read HSNK…KPEQ, PDKKPEAKPEQ, and PDKK…EKDS. Repeat copies occupy residues 1036–1052, 1053–1069, 1070–1086, and 1087–1103. The 4 X 17 AA tandem repeats stretch occupies residues 1036-1103; it reads KPEQDGSDQV…GQTPGKTPQK (68 aa). Residues 1093–1108 are compositionally biased toward polar residues; it reads SGQTPGKTPQKGQPSR. The short motif at 1129-1133 is the LPXTG sorting signal element; it reads LPTTN. At Thr1132 the chain carries Pentaglycyl murein peptidoglycan amidated threonine. Positions 1133 to 1169 are cleaved as a propeptide — removed by sortase; the sequence is NDKDTNRLHLLKLVMTTFFFGLVAHIFKTKRQKETKK.

Belongs to the peptidase S8 family. Cleaved by SpeB protease; leading to its degradation. Degradation by SpeB is probably strictly regulated to preserve integrity of C5a peptidase.

Its subcellular location is the secreted. It is found in the cell wall. It carries out the reaction The primary cleavage site is at 67-His-|-Lys-68 in human C5a with a minor secondary cleavage site at 58-Ala-|-Ser-59.. Functionally, this virulence factor of S.pyogenes specifically cleaves the human serum chemotaxin C5a at '68-Lys-|-Asp-69' bond near its C-terminus, destroying its ability to serve as a chemoattractant. The sequence is that of C5a peptidase (scpA) from Streptococcus pyogenes serotype M3 (strain ATCC BAA-595 / MGAS315).